The chain runs to 142 residues: Putative pre-16S rRNA nuclease (142 aa).

It belongs to the YqgF nuclease family.

It is found in the cytoplasm. Its function is as follows. Could be a nuclease involved in processing of the 5'-end of pre-16S rRNA. The sequence is that of Putative pre-16S rRNA nuclease from Mycoplasmoides gallisepticum (strain R(low / passage 15 / clone 2)) (Mycoplasma gallisepticum).